A 342-amino-acid polypeptide reads, in one-letter code: N-acetyl-gamma-glutamyl-phosphate reductase (342 aa).

C149 is an active-site residue.

Belongs to the NAGSA dehydrogenase family. Type 1 subfamily.

The protein localises to the cytoplasm. It catalyses the reaction N-acetyl-L-glutamate 5-semialdehyde + phosphate + NADP(+) = N-acetyl-L-glutamyl 5-phosphate + NADPH + H(+). The protein operates within amino-acid biosynthesis; L-arginine biosynthesis; N(2)-acetyl-L-ornithine from L-glutamate: step 3/4. Functionally, catalyzes the NADPH-dependent reduction of N-acetyl-5-glutamyl phosphate to yield N-acetyl-L-glutamate 5-semialdehyde. The polypeptide is N-acetyl-gamma-glutamyl-phosphate reductase (Rhodobacter capsulatus (strain ATCC BAA-309 / NBRC 16581 / SB1003)).